The chain runs to 117 residues: Eukaryotic translation initiation factor 4E-binding protein 1 (117 aa).

Composition is skewed to polar residues over residues 1-12 and 33-47; these read MSAGSSCSQTPS and YSTTPGGTLFSTTPG. Residues 1 to 47 are disordered; the sequence is MSAGSSCSQTPSRAIPTRRVALGDGVQLPPGDYSTTPGGTLFSTTPG. Ser-2 is modified (N-acetylserine). Residues Thr-36 and Thr-40 each carry the phosphothreonine modification. Ser-43 is modified (phosphoserine). Thr-45 carries the post-translational modification Phosphothreonine; by MTOR. Thr-49 carries the phosphothreonine modification. Tyr-53 bears the Phosphotyrosine mark. The YXXXXLphi motif motif lies at 53–59; the sequence is YDRKFLM. Residue Lys-56 forms a Glycyl lysine isopeptide (Lys-Gly) (interchain with G-Cter in ubiquitin) linkage. Ser-64 is modified (phosphoserine; by DYRK2, MAPK1, MAPK3 and MTOR). Residues 64 to 117 form a disordered region; it reads SPVAKTPPKDLPTIPGVTSPTSDEPPMQASQSHLHSSPEDKRAGGEESQFEMDI. Thr-69 carries the phosphothreonine; by MTOR modification. Thr-76 bears the Phosphothreonine mark. Residues 79-98 show a composition bias toward polar residues; it reads GVTSPTSDEPPMQASQSHLH. A phosphoserine mark is found at Ser-82, Ser-95, and Ser-99. Basic and acidic residues predominate over residues 99–108; the sequence is SSPEDKRAGG. Position 100 is a phosphoserine; by DYRK2 (Ser-100). At Ser-111 the chain carries Phosphoserine. The TOS motif motif lies at 113 to 117; that stretch reads FEMDI.

Belongs to the eIF4E-binding protein family. As to quaternary structure, hypophosphorylated EIF4EBP1 competes with EIF4G1/EIF4G3 to interact with EIF4E; insulin stimulated MAP-kinase (MAPK1 and MAPK3) or mTORC1 phosphorylation of EIF4EBP1 causes dissociation of the complex allowing EIF4G1/EIF4G3 to bind and consequent initiation of translation. Interacts (via TOS motif) with RPTOR; promoting phosphorylation by mTORC1. In terms of processing, phosphorylated on serine and threonine residues in response to insulin, EGF and PDGF. Phosphorylation at Thr-36, Thr-45, Ser-64 and Thr-69, corresponding to the hyperphosphorylated form, is regulated by mTORC1 and abolishes binding to EIF4E. Ubiquitinated: when eIF4E levels are low, hypophosphorylated form is ubiquitinated by the BCR(KLHL25) complex, leading to its degradation and serving as a homeostatic mechanism to maintain translation and prevent eIF4E inhibition when eIF4E levels are low. Not ubiquitinated when hyperphosphorylated (at Thr-36, Thr-45, Ser-64 and Thr-69) or associated with eIF4E. Expressed in all tissues examined; highest levels in fat and skeletal tissue, lowest levels in kidney.

The protein localises to the cytoplasm. The protein resides in the nucleus. Its function is as follows. Repressor of translation initiation that regulates EIF4E activity by preventing its assembly into the eIF4F complex: hypophosphorylated form competes with EIF4G1/EIF4G3 and strongly binds to EIF4E, leading to repress translation. In contrast, hyperphosphorylated form dissociates from EIF4E, allowing interaction between EIF4G1/EIF4G3 and EIF4E, leading to initiation of translation. Mediates the regulation of protein translation by hormones, growth factors and other stimuli that signal through the MAP kinase and mTORC1 pathways. The chain is Eukaryotic translation initiation factor 4E-binding protein 1 (Eif4ebp1) from Rattus norvegicus (Rat).